The chain runs to 229 residues: Large ribosomal subunit protein uL1 (229 aa).

It belongs to the universal ribosomal protein uL1 family. As to quaternary structure, part of the 50S ribosomal subunit.

Functionally, binds directly to 23S rRNA. The L1 stalk is quite mobile in the ribosome, and is involved in E site tRNA release. Its function is as follows. Protein L1 is also a translational repressor protein, it controls the translation of the L11 operon by binding to its mRNA. This chain is Large ribosomal subunit protein uL1, found in Clostridium botulinum (strain 657 / Type Ba4).